A 181-amino-acid chain; its full sequence is Small ribosomal subunit protein uS4 (181 aa).

The region spanning 108–180 is the S4 RNA-binding domain; that stretch reads RRLQTIVYRK…GERQRIMNQR (73 aa).

It belongs to the universal ribosomal protein uS4 family. As to quaternary structure, part of the 30S ribosomal subunit. Contacts protein S5. The interaction surface between S4 and S5 is involved in control of translational fidelity.

One of the primary rRNA binding proteins, it binds directly to 16S rRNA where it nucleates assembly of the body of the 30S subunit. In terms of biological role, with S5 and S12 plays an important role in translational accuracy. The polypeptide is Small ribosomal subunit protein uS4 (Methanocorpusculum labreanum (strain ATCC 43576 / DSM 4855 / Z)).